We begin with the raw amino-acid sequence, 120 residues long: NAD(P)H-quinone oxidoreductase subunit 3 (120 aa).

Helical transmembrane passes span 10-30 (LLVF…ASAL), 64-84 (MFAL…PWAV), and 89-109 (LGLL…VGLV).

This sequence belongs to the complex I subunit 3 family. NDH-1 can be composed of about 15 different subunits; different subcomplexes with different compositions have been identified which probably have different functions.

It is found in the cellular thylakoid membrane. The enzyme catalyses a plastoquinone + NADH + (n+1) H(+)(in) = a plastoquinol + NAD(+) + n H(+)(out). It carries out the reaction a plastoquinone + NADPH + (n+1) H(+)(in) = a plastoquinol + NADP(+) + n H(+)(out). Functionally, NDH-1 shuttles electrons from an unknown electron donor, via FMN and iron-sulfur (Fe-S) centers, to quinones in the respiratory and/or the photosynthetic chain. The immediate electron acceptor for the enzyme in this species is believed to be plastoquinone. Couples the redox reaction to proton translocation, and thus conserves the redox energy in a proton gradient. Cyanobacterial NDH-1 also plays a role in inorganic carbon-concentration. This Synechococcus sp. (strain JA-3-3Ab) (Cyanobacteria bacterium Yellowstone A-Prime) protein is NAD(P)H-quinone oxidoreductase subunit 3.